Here is a 295-residue protein sequence, read N- to C-terminus: G1/S-specific cyclin-D1 (295 aa).

Positions 28–152 (LRAMLKAEET…LLVNKLKWNL (125 aa)) constitute a Cyclin N-terminal domain. Residues 262-295 (AQQNMDPKAAEEEEEEEEEVDLACTPTDVRDVDI) are disordered. Residue lysine 269 forms a Glycyl lysine isopeptide (Lys-Gly) (interchain with G-Cter in ubiquitin) linkage. Positions 272–282 (EEEEEEEEEVD) are enriched in acidic residues. At threonine 286 the chain carries Phosphothreonine.

It belongs to the cyclin family. Cyclin D subfamily. Interacts with either CDK4 or CDK6 protein kinase to form a serine/threonine kinase holoenzyme complex. The cyclin subunit imparts substrate specificity to the complex. Component of the ternary complex CCND1/CDK4/CDKN1B required for nuclear translocation and modulation of CDK4-mediated kinase activity. Interacts directly with CDKN1B. Can form similar complexes with either CDKN1A or CDKN2A. Interacts with UHRF2; the interaction ubiquitinates CCND1 and appears to occur independently of phosphorylation. Interacts with USP2. Interacts (via cyclin N-terminal domain) with INSM1 (via N-terminal region); the interaction competes with the binding of CCND1 to CDK4 during cell cycle progression and inhibits CDK4 activity. Interacts with CDK4; the interaction is prevented with the binding of CCND1 to INSM1 during cell cycle progression. Post-translationally, phosphorylation at Thr-286 by MAP kinases is required for ubiquitination and degradation by the DCX(AMBRA1) complex. It also plays an essential role for recognition by the FBXO31 component of SCF (SKP1-cullin-F-box) protein ligase complex following DNA damage. Ubiquitinated at Lys-269 by the DCX(AMBRA1) complex during the transition from G1 to S cell phase, leading to its degradation: ubiquitination is dependent on Thr-286 phosphorylation. The DCX(AMBRA1) complex represents the major regulator of CCND1 stability during the G1/S transition. Also ubiquitinated by the SCF(FBXO4) and Cul7-RING(FBXW8) ubiquitin-protein ligase complexes. Following DNA damage it is ubiquitinated by the SCF(FBXO31) protein ligase complex. SCF(FBXO31) ubiquitination is dependent on Thr-286 phosphorylation. Ubiquitinated also by UHRF2 apparently in a phosphorylation-independent manner. Ubiquitination leads to its degradation and G1 arrest. Deubiquitinated by USP2; leading to its stabilization.

The protein localises to the nucleus. It is found in the cytoplasm. The protein resides in the nucleus membrane. Regulatory component of the cyclin D1-CDK4 (DC) complex that phosphorylates and inhibits members of the retinoblastoma (RB) protein family including RB1 and regulates the cell-cycle during G(1)/S transition. Phosphorylation of RB1 allows dissociation of the transcription factor E2F from the RB/E2F complex and the subsequent transcription of E2F target genes which are responsible for the progression through the G(1) phase. Hypophosphorylates RB1 in early G(1) phase. Cyclin D-CDK4 complexes are major integrators of various mitogenenic and antimitogenic signals. Also a substrate for SMAD3, phosphorylating SMAD3 in a cell-cycle-dependent manner and repressing its transcriptional activity. Component of the ternary complex, cyclin D1/CDK4/CDKN1B, required for nuclear translocation and activity of the cyclin D-CDK4 complex. Exhibits transcriptional corepressor activity with INSM1 on the NEUROD1 and INS promoters in a cell cycle-independent manner. The chain is G1/S-specific cyclin-D1 from Homo sapiens (Human).